A 121-amino-acid chain; its full sequence is Glycine cleavage system H protein (121 aa).

In terms of domain architecture, Lipoyl-binding spans 22-102 (IAWVGITKYA…DSSVWLFKAE (81 aa)). Position 63 is an N6-lipoyllysine (Lys-63).

This sequence belongs to the GcvH family. As to quaternary structure, the glycine cleavage system is composed of four proteins: P, T, L and H. (R)-lipoate serves as cofactor.

The glycine cleavage system catalyzes the degradation of glycine. The H protein shuttles the methylamine group of glycine from the P protein to the T protein. The polypeptide is Glycine cleavage system H protein (Tropheryma whipplei (strain TW08/27) (Whipple's bacillus)).